Consider the following 311-residue polypeptide: MKKKIGLLVMAYGTPYKEEDIERYYTHIRRGRKPSPEMLEDLTERYRAIGGISPLATITLEQAKKLEKRLNEVQDEVEYHMYLGLKHIEPFIEDAVKEMHNDGIQDAIALVLAPHYSTFSVKSYVGRAQEEAEKLGNLTIHGIDSWYKEPKFIQYWVDAVKGIYSGMSDAEREKAVLIVSAHSLPEKIIAMGDPYPDQLNETADYIARGAEVANYAVGWQSAGNTPDPWIGPDVQDLTRELNEKYGYTSFVYAPVGFVAEHLEVLYDNDFECKVVTDEIGAKYYRPEMPNASDAFIDCLTDVVVKKKESVM.

Residues tyrosine 12, arginine 29, arginine 45–tyrosine 46, serine 53, and tyrosine 124 contribute to the Fe-coproporphyrin III site. Histidine 182 and glutamate 263 together coordinate Fe(2+).

The protein belongs to the ferrochelatase family.

It localises to the cytoplasm. It catalyses the reaction Fe-coproporphyrin III + 2 H(+) = coproporphyrin III + Fe(2+). The protein operates within porphyrin-containing compound metabolism; protoheme biosynthesis. Its function is as follows. Involved in coproporphyrin-dependent heme b biosynthesis. Catalyzes the insertion of ferrous iron into coproporphyrin III to form Fe-coproporphyrin III. This Bacillus thuringiensis subsp. konkukian (strain 97-27) protein is Coproporphyrin III ferrochelatase 1.